Here is a 698-residue protein sequence, read N- to C-terminus: Serotransferrin (698 aa).

The first 19 residues, 1–19 (MRLAVGALLVCAVLGLCLA), serve as a signal peptide directing secretion. 2 consecutive Transferrin-like domains span residues 25–347 (VRWC…NLRE) and 361–683 (VKWC…NLRK). 2 cysteine pairs are disulfide-bonded: cysteine 28–cysteine 67 and cysteine 38–cysteine 58. Arginine 42 carries the post-translational modification Dimethylated arginine. O-linked (GalNAc...) serine glycosylation occurs at serine 51. The Fe(3+) site is built by aspartate 82 and tyrosine 114. Disulfide bonds link cysteine 137–cysteine 213, cysteine 156–cysteine 350, cysteine 177–cysteine 193, cysteine 180–cysteine 196, cysteine 190–cysteine 198, cysteine 246–cysteine 260, cysteine 358–cysteine 615, cysteine 364–cysteine 396, cysteine 374–cysteine 387, cysteine 421–cysteine 693, cysteine 437–cysteine 656, cysteine 469–cysteine 542, cysteine 493–cysteine 684, cysteine 503–cysteine 517, cysteine 514–cysteine 525, cysteine 582–cysteine 596, and cysteine 634–cysteine 639. Positions 139, 143, 145, and 146 each coordinate hydrogencarbonate. Position 207 (tyrosine 207) interacts with Fe(3+). Histidine 268 contributes to the Fe(3+) binding site. A Phosphoserine modification is found at serine 389. Residues aspartate 411 and tyrosine 445 each coordinate Fe(3+). Threonine 471, arginine 475, alanine 477, and glycine 478 together coordinate hydrogencarbonate. Tyrosine 536 serves as a coordination point for Fe(3+). Histidine 604 contributes to the Fe(3+) binding site. Residue asparagine 630 is glycosylated (N-linked (GlcNAc...) asparagine). Serine 685 is modified (phosphoserine).

It belongs to the transferrin family. As to quaternary structure, monomer. Part of a complex composed of SLC40A1/ferroportin, TF/transferrin and HEPH/hephaestin that transfers iron from cells to transferrin. In terms of tissue distribution, expressed by the liver and secreted in plasma.

The protein localises to the secreted. Its function is as follows. Transferrins are iron binding transport proteins which can bind two Fe(3+) ions in association with the binding of an anion, usually bicarbonate. It is responsible for the transport of iron from sites of absorption and heme degradation to those of storage and utilization. Serum transferrin may also have a further role in stimulating cell proliferation. In Pan troglodytes (Chimpanzee), this protein is Serotransferrin (TF).